A 178-amino-acid polypeptide reads, in one-letter code: Stage V sporulation protein T (178 aa).

The region spanning 5–51 is the SpoVT-AbrB domain; that stretch reads GIVRRIDDLGRVVIPKEIRRTLRIREGDPLEIFVDRDGEVILKKYSP. The GAF-like stretch occupies residues 56-178; it reads GDFAKEYADA…AGFLARQMEQ (123 aa).

The protein to B.subtilis AbrB and Abh. As to quaternary structure, homotetramer. Two monomers dimerize via their N-terminal swapped-hairpin domains. These dimers further associate into tetramers through helical interactions between their C-terminal GAF-like domains.

In terms of biological role, transcriptional factor that positively regulates or negatively the expression of a large number of forespore-specific sigma G-dependent genes. May provide a mechanism of feedback control that is important for forespore development. SpoVT levels during spore formation have a major impact on the germination and the resistance of the resultant spores. In Bacillus subtilis (strain 168), this protein is Stage V sporulation protein T.